Consider the following 289-residue polypeptide: Formamidopyrimidine-DNA glycosylase (289 aa).

Pro2 (schiff-base intermediate with DNA) is an active-site residue. Glu3 acts as the Proton donor in catalysis. Lys61 (proton donor; for beta-elimination activity) is an active-site residue. Positions 96, 115, and 161 each coordinate DNA. The segment at 247–281 (SAYGQENLPCPRCGAPIKREKFMNRSSFSCPRCQP) adopts an FPG-type zinc-finger fold. The Proton donor; for delta-elimination activity role is filled by Arg271.

Belongs to the FPG family. Monomer. The cofactor is Zn(2+).

It carries out the reaction Hydrolysis of DNA containing ring-opened 7-methylguanine residues, releasing 2,6-diamino-4-hydroxy-5-(N-methyl)formamidopyrimidine.. It catalyses the reaction 2'-deoxyribonucleotide-(2'-deoxyribose 5'-phosphate)-2'-deoxyribonucleotide-DNA = a 3'-end 2'-deoxyribonucleotide-(2,3-dehydro-2,3-deoxyribose 5'-phosphate)-DNA + a 5'-end 5'-phospho-2'-deoxyribonucleoside-DNA + H(+). Functionally, involved in base excision repair of DNA damaged by oxidation or by mutagenic agents. Acts as a DNA glycosylase that recognizes and removes damaged bases. Has a preference for oxidized purines, such as 7,8-dihydro-8-oxoguanine (8-oxoG). Has AP (apurinic/apyrimidinic) lyase activity and introduces nicks in the DNA strand. Cleaves the DNA backbone by beta-delta elimination to generate a single-strand break at the site of the removed base with both 3'- and 5'-phosphates. This chain is Formamidopyrimidine-DNA glycosylase, found in Rhodococcus erythropolis (strain PR4 / NBRC 100887).